The chain runs to 640 residues: MPTITLPDGSQRSFDHPVSVAEVAASIGAGLAKATVAGKVNGKLVDACDIIDSDATLQIITPKDEEGLEIIRHSCAHLVGHAVKQLYPTAKMVIGPVIDEGFYYDIAFERPFTPDDMAAIEQRMHQLIDTEYDVIKKVTPRAEVIEVFKARGEDYKLRLVEDMPNEQAMGLYYHEEYVDMCRGPHVPNTRFLKSFKLTKLSGAYWRGDAKNEQLQRVYGTAWADKKQLAAYIQRIEEAEKRDHRKIGKRLGLFHTQEEAPGMVFWHPNGWTLYQVLEQYMRKVQRDNGYLEIKTPQVVDRSLWEKSGHWANYADNMFTTESESRDYAIKPMNCPCHVQVFNQGLKSYRELPMRLAEFGACHRNEPSGALHGIMRVRAFTQDDAHIFCTEEQMQAESAAFIKLTMDVYRDFGFTDVEMKLSTRPEKRVGSDELWDRAEAALAAALDSAGLPYDLQPGEGAFYGPKIEFSLKDCLGRVWQCGTLQLDFNLPVRLGAEYVSEDNSRKHPVMLHRAILGSFERFVGILIEHYEGAFPAWLAPTQAVIMNITDKQADFVVQVEKTLNESGFRAKSDLRNEKIGFKIREHTLLKVPYLLVIGDKEVEMQTVAVRTREGADLGSMPVAQFAEFLAQAVSRRGRPDSE.

The 61-residue stretch at 1–61 (MPTITLPDGS…DSDATLQIIT (61 aa)) folds into the TGS domain. The interval 242–533 (DHRKIGKRLG…LIEHYEGAFP (292 aa)) is catalytic. Positions 333, 384, and 510 each coordinate Zn(2+).

The protein belongs to the class-II aminoacyl-tRNA synthetase family. Homodimer. Zn(2+) is required as a cofactor.

It localises to the cytoplasm. It catalyses the reaction tRNA(Thr) + L-threonine + ATP = L-threonyl-tRNA(Thr) + AMP + diphosphate + H(+). Its function is as follows. Catalyzes the attachment of threonine to tRNA(Thr) in a two-step reaction: L-threonine is first activated by ATP to form Thr-AMP and then transferred to the acceptor end of tRNA(Thr). Also edits incorrectly charged L-seryl-tRNA(Thr). This chain is Threonine--tRNA ligase, found in Pseudomonas fluorescens (strain Pf0-1).